The chain runs to 155 residues: Deoxyuridine 5'-triphosphate nucleotidohydrolase (155 aa).

Substrate contacts are provided by residues 74 to 76 (RSG), asparagine 87, and 91 to 93 (LID).

The protein belongs to the dUTPase family. Mg(2+) is required as a cofactor.

The enzyme catalyses dUTP + H2O = dUMP + diphosphate + H(+). It functions in the pathway pyrimidine metabolism; dUMP biosynthesis; dUMP from dCTP (dUTP route): step 2/2. Functionally, this enzyme is involved in nucleotide metabolism: it produces dUMP, the immediate precursor of thymidine nucleotides and it decreases the intracellular concentration of dUTP so that uracil cannot be incorporated into DNA. This is Deoxyuridine 5'-triphosphate nucleotidohydrolase from Xanthomonas oryzae pv. oryzae (strain PXO99A).